Reading from the N-terminus, the 206-residue chain is Transcription factor BTF3 (206 aa).

The segment at 1-42 is disordered; the sequence is MRRTGAPAQADSRGRGRARGGCPGGEATLSQPPPRGGTRGQE. R19 carries the omega-N-methylarginine modification. Residue S30 is modified to Phosphoserine. An N6-methyllysine mark is found at K46 and K54. The NAC-A/B domain maps to 82-147; it reads TADDKKLQFS…AETKQLTEML (66 aa). Phosphothreonine is present on T160. The disordered stretch occupies residues 170–206; it reads PKQSVDGKAPLATGEDDDDEVPDLVENFDEASKNEAN. S173 carries the phosphoserine modification. The span at 183–198 shows a compositional bias: acidic residues; that stretch reads GEDDDDEVPDLVENFD.

It belongs to the NAC-beta family. In terms of assembly, part of the nascent polypeptide-associated complex (NAC), which is a heterodimer of NACA and BTF3 (via NAC-A/B domains). NAC associates with ribosomes through the BTF3/NACB subunit. Both subunits can contact nascent polypeptide chains.

The protein localises to the cytoplasm. It is found in the nucleus. Its function is as follows. When associated with NACA, prevents inappropriate targeting of non-secretory polypeptides to the endoplasmic reticulum (ER). Binds to nascent polypeptide chains as they emerge from the ribosome and blocks their interaction with the signal recognition particle (SRP), which normally targets nascent secretory peptides to the ER. BTF3 is also a general transcription factor that can form a stable complex with RNA polymerase II. Required for the initiation of transcription. The polypeptide is Transcription factor BTF3 (BTF3) (Homo sapiens (Human)).